A 344-amino-acid polypeptide reads, in one-letter code: Methionine import ATP-binding protein MetN 1 (344 aa).

The region spanning 2 to 241 (IEIRNLSQRF…PHHEVTRALI (240 aa)) is the ABC transporter domain. 38–45 (GRSGAGKS) is an ATP binding site.

This sequence belongs to the ABC transporter superfamily. Methionine importer (TC 3.A.1.24) family. As to quaternary structure, the complex is composed of two ATP-binding proteins (MetN), two transmembrane proteins (MetI) and a solute-binding protein (MetQ).

Its subcellular location is the cell inner membrane. It catalyses the reaction L-methionine(out) + ATP + H2O = L-methionine(in) + ADP + phosphate + H(+). It carries out the reaction D-methionine(out) + ATP + H2O = D-methionine(in) + ADP + phosphate + H(+). Its function is as follows. Part of the ABC transporter complex MetNIQ involved in methionine import. Responsible for energy coupling to the transport system. The polypeptide is Methionine import ATP-binding protein MetN 1 (Burkholderia mallei (strain ATCC 23344)).